The primary structure comprises 211 residues: Uracil phosphoribosyltransferase (211 aa).

Residues Arg-78, Arg-103, and Asp-130 to Thr-138 each bind 5-phospho-alpha-D-ribose 1-diphosphate. Residues Ile-195 and Gly-200–Ala-202 contribute to the uracil site. A 5-phospho-alpha-D-ribose 1-diphosphate-binding site is contributed by Asp-201.

This sequence belongs to the UPRTase family. Mg(2+) is required as a cofactor.

The enzyme catalyses UMP + diphosphate = 5-phospho-alpha-D-ribose 1-diphosphate + uracil. Its pathway is pyrimidine metabolism; UMP biosynthesis via salvage pathway; UMP from uracil: step 1/1. Allosterically activated by GTP. Catalyzes the conversion of uracil and 5-phospho-alpha-D-ribose 1-diphosphate (PRPP) to UMP and diphosphate. This chain is Uracil phosphoribosyltransferase, found in Kocuria rhizophila (strain ATCC 9341 / DSM 348 / NBRC 103217 / DC2201).